We begin with the raw amino-acid sequence, 888 residues long: MLSRLFRMHGLFVASHPWEVIVGTVTLTICMMSMNMFTGNDKICGWNYECPKFEEDVLSSDIIILTITRCIAILYIYFQFQNLRQLGSKYILGIAGLFTIFSSFVFSTVVIHFLDKELTGLNEALPFFLLLIDLSRASALAKFALSSNSQDEVRENIARGMAILGPTFTLDALVECLVIGVGTMSGVRQLEIMCCFGCMSVLANYFVFMTFFPACVSLVLELSRESREGRPIWQLSHFARVLEEEENKPNPVTQRVKMIMSLGLVLVHAHSRWIADPSPQNSTADNSKVSLGLDENVSKRIEPSVSLWQFYLSKMISMDIEQVITLSLALLLAVKYIFFEQAETESTLSLKNPITSPVVTQKKVPDSCCRREPVVVRNNQKFCSVEEEAGMSQDRKVEVIKPLVAETDSPHRAAFVVGGSSFPDTSLVLETKEPEIELPKEPRPNEECLQILGNAEKGAKFLSDAEIIQLVNAKHIPAYKLETLMETHERGVSIRRQLLSKKLPEPSSLQYLPYRDYNYSLVLGACCENVIGYMPIPVGVVGPLCLDGKEFQVPMATTEGCLVASTNRGCRAICLGGGASSRVLADGMTRGPVVRLPRACDSAEVKAWLETPEGFAVIKEAFDSTSRFARLQKLHISMAGRNLYIRFQSRTGDAMGMNMISKGTEKALSKLHEYFPEMQILAVSGNYCTDKKPAAVNWIEGRGKTVVCEAVIPAKVVREVLKTTTEAMIDVNINKNLVGSAMAGSIGGYNAHAANYVTAIYIACGQDAAQNVGSSNCITLMEASGPPNEDLYISCTMPSIEIGTVGGGTNLLPQQACLQMLGVQGACKDSPGENARQLARIVCGTVMAGELSLMAALAAGHLVKSHMIHNRSKINLQDLEGACTKKAA.

Topologically, residues 1–9 (MLSRLFRMH) are cytoplasmic. The chain crosses the membrane as a helical span at residues 10-39 (GLFVASHPWEVIVGTVTLTICMMSMNMFTG). Residues 40 to 56 (NDKICGWNYECPKFEED) are Lumenal-facing. Residues 57 to 78 (VLSSDIIILTITRCIAILYIYF) form a helical membrane-spanning segment. The 158-residue stretch at 61-218 (DIIILTITRC…MTFFPACVSL (158 aa)) folds into the SSD domain. Positions 75 to 78 (YIYF) match the INSIG-binding motif motif. Residues 79–89 (QFQNLRQLGSK) are Cytoplasmic-facing. Residue K89 forms a Glycyl lysine isopeptide (Lys-Gly) (interchain with G-Cter in ubiquitin) linkage. A helical membrane pass occupies residues 90–114 (YILGIAGLFTIFSSFVFSTVVIHFL). At 115 to 123 (DKELTGLNE) the chain is on the lumenal side. Residues 124–149 (ALPFFLLLIDLSRASALAKFALSSNS) traverse the membrane as a helical segment. The Cytoplasmic segment spans residues 150–159 (QDEVRENIAR). Residues 160-187 (GMAILGPTFTLDALVECLVIGVGTMSGV) traverse the membrane as a helical segment. Topologically, residues 188 to 191 (RQLE) are lumenal. Residues 192 to 220 (IMCCFGCMSVLANYFVFMTFFPACVSLVL) traverse the membrane as a helical segment. The Cytoplasmic segment spans residues 221-248 (ELSRESREGRPIWQLSHFARVLEEEENK). K248 participates in a covalent cross-link: Glycyl lysine isopeptide (Lys-Gly) (interchain with G-Cter in ubiquitin). A helical transmembrane segment spans residues 249–275 (PNPVTQRVKMIMSLGLVLVHAHSRWIA). Residues 276 to 314 (DPSPQNSTADNSKVSLGLDENVSKRIEPSVSLWQFYLSK) lie on the Lumenal side of the membrane. Residues N281 and N296 are each glycosylated (N-linked (GlcNAc...) asparagine). Residues 315 to 339 (MISMDIEQVITLSLALLLAVKYIFF) traverse the membrane as a helical segment. Residues 340–888 (EQAETESTLS…LEGACTKKAA (549 aa)) lie on the Cytoplasmic side of the membrane. Catalysis depends on charge relay system residues E559, K691, and D767. The Proton donor role is filled by H866. S872 is subject to Phosphoserine; by AMPK.

This sequence belongs to the HMG-CoA reductase family. As to quaternary structure, homotetramer. Homodimer. Interacts (via its SSD) with INSIG1; the interaction, accelerated by sterols, leads to the recruitment of HMGCR to AMFR/gp78 for its ubiquitination by the sterol-mediated ERAD pathway. Interacts with UBIAD1. Post-translationally, undergoes sterol-mediated ubiquitination and ER-associated degradation (ERAD). Accumulation of sterols in the endoplasmic reticulum (ER) membrane, triggers binding of the reductase to the ER membrane protein INSIG1 or INSIG2. The INSIG1 binding leads to the recruitment of the ubiquitin ligase, AMFR/gp78, RNF139 or RNF145, initiating ubiquitination of the reductase. The ubiquitinated reductase is then extracted from the ER membrane and delivered to cytosolic 26S proteosomes by a mechanism probably mediated by the ATPase Valosin-containing protein VCP/p97. The INSIG2-binding leads to the recruitment of the ubiquitin ligase RNF139, initiating ubiquitination of the reductase. Lys-248 is the main site of ubiquitination. Ubiquitination is enhanced by the presence of a geranylgeranylated protein. In terms of processing, N-glycosylated. Deglycosylated by NGLY1 on release from the endoplasmic reticulum (ER) in a sterol-mediated manner. Phosphorylated. Phosphorylation at Ser-872 reduces the catalytic activity.

It is found in the endoplasmic reticulum membrane. The protein localises to the peroxisome membrane. It catalyses the reaction (R)-mevalonate + 2 NADP(+) + CoA = (3S)-3-hydroxy-3-methylglutaryl-CoA + 2 NADPH + 2 H(+). It participates in metabolic intermediate biosynthesis; (R)-mevalonate biosynthesis; (R)-mevalonate from acetyl-CoA: step 3/3. Regulated by a negative feedback mechanism through sterols and non-sterol metabolites derived from mevalonate. Phosphorylation at Ser-872 down-regulates the catalytic activity. Its function is as follows. Catalyzes the conversion of (3S)-hydroxy-3-methylglutaryl-CoA (HMG-CoA) to mevalonic acid, the rate-limiting step in the synthesis of cholesterol and other isoprenoids, thus plays a critical role in cellular cholesterol homeostasis. This Oryctolagus cuniculus (Rabbit) protein is 3-hydroxy-3-methylglutaryl-coenzyme A reductase (HMGCR).